The following is a 1829-amino-acid chain: MNEGEVVLTPEQIQTLRGYASRGDTYGGWRYLANLGDRYADNAAAIVGKDTNLNGLNLWMKKGVENLWDDTVGKKTRLEKFDRVALQHFSQYVDLINKNNGRLPNTSEIERSYYKAVTYHGVSSSAAIDLVINRSLPDMADGYWALGLGIEAERIHNEQAVNNPNGSERDNRKQLISALDKGFDGSFKEKHFTFLQSVMMDLTKLGVEYTIDGWQKIGGWGNGIINDLYKSVVKREWTGIFEIVNNNIKQGNEAFKNEINSLVHDMKAAGKEFGDDLNTQWNNLTQAAEIIYNDIVDNTSQGIEKGVKAIKELSEKMKNAASDLADGSAEKAKQVVEDLAQAAKEAYENAKSTAEKAAQAAREFFKGLPSFKDLAEKFRDLFPNPEGWIDDGHQCFAPWVKETKKRNGKYHVYDPLALDLDGDGIETVATKGFSGSLFDHNRDGIRTATGWVAADDGLLVRDLNGNGIIDNGAELFGDNTKLADGSFAKHGYAALAELDSNGDNIINAADAAFQTLRVWQDLNQDGISQANELRTLEELGIQSLDLAYKDVNKNLGNGNTLAQQGSYTKTDGTTAKMGDLLLAADNLHSRFKDKVELTAEQAKAANLAGIGRLRDLREAAALSGDLANMLKAYSAAETKEAQLALLDNLIHKWAETDSNWGKKSPMRLSTDWTQTANEGIALTPSQVAQLKKNALVSLSDKAKAAIDAARDRIAVLDAYTGQDSSTLYYMSEEDALNIVKVTNDTYDHLAKNIYQNLLFQTRLQPYLNQISFKMENDTFTLDFSGLVQAFNHVKETNPQKAFVDLAEMLAYGELRSWYEGRRLMADYVEEAKKAGKFEDYQKVLGQETVALLAKTSGTQADDILQNVGFGHNKNVSLYGNDGNDTLIGGAGNDYLEGGSGSDTYVFGKGFGQDTVYNYDYATGRKDIIRFTDGITADMLTFTREGNHLLIKAKDDSGQVTVQSYFQNDGSGAYRIDEIHFDNGKVLDVATVKELVQQSTDGSDRLYAYQSGNTLNGGLGDDYLYGADGDDLLNGDAGNDSIYSGNGNDTLNGGEGNDALYGYNGNDALNGGEGNDHLNGEDGNDTLIGGAGNDYLEGGSGSDTYVFGKGFGQDTVYNYDYATGRKDIIRFTDGITADMLTFTREGNHLLIKAKDGSGQVTVQSYFQNDGSGAYRIDEIHFDNGKVLDVATVKELVQQSTDGSDRLYAYQSGNTLNGGLGDDYLYGADGDDLLNGDAGNDSIYSGNGNDTLDGGEGNDALYGYNGNDALNGGEGNDHLNGEDGNDTLIGGAGNDYLEGGSGSDTYVFGKGFGQDTVYNYDYATGRKDIIRFTDGITADMLTFTREGNHLLIKAKDDSGQVTVQSYFQNDGSGAYRIDEIHFDNGKVLDVATVKELVQQSTDGSDRLYAYQSGSTLNGGLGDDYLYGADGDDLLNGDAGNDSIYSGNGNDTLDGGEGNDALYGYNGNDALNGGEGNDHLNGEDGNDTLIGGAGNDYLEGGSGSDTYVFGKGFGQDTVYNYDYATGRKDIIRFTDGITADMLTFTREGNHLLIKAKDGSGQVTVQSYFQNDGSGAYRIDEIHFDNGKVLDVATVKKLVQQSTDGSDRLYAYQSGNTLNGGLGDDYLYGADGDDLLNGDAGNDSIYSGNGNDTLNGGEGNDALYGYNGNDVLNGGEGNDHLNGEDGNDTLIGGAGNDYLEGGSGSDTYVFGKGFGQDTVYNYHVDKNSDTMHFKGFKAADVHFIRSGSDLVLSASEQDNVRISGFFYGENHRVDTFVFDDAAISNPDFAKYINAGNNLVQSMSVFGSNTAATGGNVDANTQSVQQPLLVTPSA.

22 Hemolysin-type calcium-binding repeats span residues 869–886, 887–904, 1015–1032, 1033–1050, 1051–1068, 1069–1086, 1087–1104, 1215–1232, 1233–1250, 1251–1268, 1269–1286, 1287–1304, 1415–1432, 1433–1450, 1451–1468, 1469–1486, 1487–1504, 1615–1632, 1633–1650, 1651–1668, 1669–1686, and 1687–1704; these read FGHNKNVSLYGNDGNDTL, IGGAGNDYLEGGSGSDTY, NGGLGDDYLYGADGDDLL, NGDAGNDSIYSGNGNDTL, NGGEGNDALYGYNGNDAL, NGGEGNDHLNGEDGNDTL, DGGEGNDALYGYNGNDAL, and NGGEGNDALYGYNGNDVL.

Belongs to the RTX prokaryotic toxin (TC 1.C.11) family.

It localises to the cell outer membrane. Its subcellular location is the secreted. Its function is as follows. May participate in the pathogenesis of meningococcal disease. The chain is Iron-regulated protein FrpC (frpC) from Neisseria meningitidis serogroup C.